A 294-amino-acid chain; its full sequence is tRNA pseudouridine synthase B (294 aa).

Aspartate 38 acts as the Nucleophile in catalysis.

It belongs to the pseudouridine synthase TruB family. Type 1 subfamily.

It catalyses the reaction uridine(55) in tRNA = pseudouridine(55) in tRNA. Its function is as follows. Responsible for synthesis of pseudouridine from uracil-55 in the psi GC loop of transfer RNAs. The polypeptide is tRNA pseudouridine synthase B (Clostridium perfringens (strain ATCC 13124 / DSM 756 / JCM 1290 / NCIMB 6125 / NCTC 8237 / Type A)).